Consider the following 783-residue polypeptide: Heat shock transcription factor (783 aa).

The interval Met1 to Ser59 is disordered. Low complexity-rich tracts occupy residues Pro11 to Pro23 and Leu31 to Leu42. Residues Asn43 to Ser59 are compositionally biased toward polar residues. The DNA-binding element occupies Met78–Pro168. The segment at Val181–Ser262 is disordered. Composition is skewed to low complexity over residues Ser189 to Val199 and Ser209 to Gly233. A compositionally biased stretch (polar residues) spans Asn238–Ser262. Residues Gly280 to Leu333 are involved in trimerization. 2 stretches are compositionally biased toward basic and acidic residues: residues Arg350–Ala372 and Thr399–Val415. 3 disordered regions span residues Arg350–Pro554, Gln599–Leu652, and Gln736–Ser783. A compositionally biased stretch (polar residues) spans Gly418 to Phe448. Low complexity-rich tracts occupy residues Pro452–Ser467, Leu497–Ser511, Pro522–Pro550, and Asn616–Met632. Over residues Gly742 to Gly752 the composition is skewed to acidic residues. Over residues Asp753–Ala765 the composition is skewed to gly residues.

The protein belongs to the HSF family. In terms of assembly, homotrimer. Homotrimerization increases the affinity of HSF1 to DNA. Interacts with transcriptional coregulator SSA1 on chromatin.

The protein localises to the nucleus. Functionally, DNA-binding transcription factor that specifically binds heat shock promoter elements (HSE) and activates transcription. Together with its coregulator SSA1, activates expression of laccase LAC1 during glucose starvation. The chain is Heat shock transcription factor from Cryptococcus neoformans var. neoformans serotype D (strain JEC21 / ATCC MYA-565) (Filobasidiella neoformans).